Here is a 614-residue protein sequence, read N- to C-terminus: Leucine aminopeptidase 2 (614 aa).

A peptide contacts are provided by residues 139–141 (QCQ) and 271–276 (PYGGME). Position 300 (H300) interacts with Zn(2+). Residue E301 is the Proton acceptor of the active site. Zn(2+) contacts are provided by H304 and E323. Residue Y385 is the Proton donor of the active site.

The protein belongs to the peptidase M1 family. It depends on Zn(2+) as a cofactor.

It localises to the cytoplasm. The protein resides in the nucleus. It catalyses the reaction an epoxide + H2O = an ethanediol. Aminopeptidase that preferentially cleaves di- and tripeptides. Also has low epoxide hydrolase activity (in vitro). Can hydrolyze the epoxide leukotriene LTA(4) but it forms preferentially 5,6-dihydroxy-7,9,11,14-eicosatetraenoic acid rather than the cytokine leukotriene B(4) as the product compared to the homologous mammalian enzyme (in vitro). The protein is Leucine aminopeptidase 2 of Aspergillus fumigatus (strain ATCC MYA-4609 / CBS 101355 / FGSC A1100 / Af293) (Neosartorya fumigata).